Here is a 546-residue protein sequence, read N- to C-terminus: CTP synthase (546 aa).

The interval 1–265 (MTKYVFVTGG…DEIVCHKLNI (265 aa)) is amidoligase domain. S13 provides a ligand contact to CTP. Position 13 (S13) interacts with UTP. Residues 14-19 (SLGKGI) and D71 each bind ATP. D71 and E139 together coordinate Mg(2+). Residues 146–148 (DIE), 186–191 (KTKPTQ), and K222 contribute to the CTP site. UTP contacts are provided by residues 186–191 (KTKPTQ) and K222. Positions 290 to 543 (KIAFVGKYVD…VKAALANQKA (254 aa)) constitute a Glutamine amidotransferase type-1 domain. G351 contacts L-glutamine. C378 acts as the Nucleophile; for glutamine hydrolysis in catalysis. L-glutamine-binding positions include 379-382 (LGMQ), E402, and R469. Catalysis depends on residues H516 and E518.

The protein belongs to the CTP synthase family. In terms of assembly, homotetramer.

It catalyses the reaction UTP + L-glutamine + ATP + H2O = CTP + L-glutamate + ADP + phosphate + 2 H(+). It carries out the reaction L-glutamine + H2O = L-glutamate + NH4(+). The enzyme catalyses UTP + NH4(+) + ATP = CTP + ADP + phosphate + 2 H(+). It functions in the pathway pyrimidine metabolism; CTP biosynthesis via de novo pathway; CTP from UDP: step 2/2. Allosterically activated by GTP, when glutamine is the substrate; GTP has no effect on the reaction when ammonia is the substrate. The allosteric effector GTP functions by stabilizing the protein conformation that binds the tetrahedral intermediate(s) formed during glutamine hydrolysis. Inhibited by the product CTP, via allosteric rather than competitive inhibition. Its function is as follows. Catalyzes the ATP-dependent amination of UTP to CTP with either L-glutamine or ammonia as the source of nitrogen. Regulates intracellular CTP levels through interactions with the four ribonucleotide triphosphates. This Dechloromonas aromatica (strain RCB) protein is CTP synthase.